Here is a 1191-residue protein sequence, read N- to C-terminus: DNA-directed RNA polymerase subunit beta (1191 aa).

Over residues 1171 to 1181 the composition is skewed to basic and acidic residues; that stretch reads RVKQEAEEKQA. Residues 1171–1191 are disordered; it reads RVKQEAEEKQAEQVSEVVQED. The span at 1182–1191 shows a compositional bias: low complexity; the sequence is EQVSEVVQED.

This sequence belongs to the RNA polymerase beta chain family. The RNAP catalytic core consists of 2 alpha, 1 beta, 1 beta' and 1 omega subunit. When a sigma factor is associated with the core the holoenzyme is formed, which can initiate transcription.

The enzyme catalyses RNA(n) + a ribonucleoside 5'-triphosphate = RNA(n+1) + diphosphate. In terms of biological role, DNA-dependent RNA polymerase catalyzes the transcription of DNA into RNA using the four ribonucleoside triphosphates as substrates. The sequence is that of DNA-directed RNA polymerase subunit beta from Streptococcus agalactiae serotype Ia (strain ATCC 27591 / A909 / CDC SS700).